A 714-amino-acid chain; its full sequence is Rho-GTPase-activating protein RGD2 (714 aa).

Positions 2–441 (LSFCDYFWSE…LENDIDPTAD (440 aa)) constitute an F-BAR domain. Positions 218–298 (PKTDYKLPLI…WKNTAYMFAN (81 aa)) constitute a DEP domain. The region spanning 475–704 (VDLETRCRLD…DLLTHKKQIF (230 aa)) is the Rho-GAP domain.

In terms of assembly, interacts with CDC42 and RHO5.

In terms of biological role, acts in signal transduction. Activates CDC42 and RHO5. This chain is Rho-GTPase-activating protein RGD2 (RGD2), found in Saccharomyces cerevisiae (strain ATCC 204508 / S288c) (Baker's yeast).